A 724-amino-acid chain; its full sequence is Solute carrier organic anion transporter family member 4C1 (724 aa).

At 1 to 105 (MKSAKGIENL…QCLQRCNTPG (105 aa)) the chain is on the cytoplasmic side. A phosphoserine mark is found at S15, S16, S24, S26, and S28. The disordered stretch occupies residues 30–71 (IEVSALSSDPQRENSQPQELQKPQEPQKSPEPSLPSAPPNVS). The segment covering 44-60 (SQPQELQKPQEPQKSPE) has biased composition (low complexity). The chain crosses the membrane as a helical span at residues 106-126 (GFLLHYCLLAVTQGIVVNGLV). Residues 127–145 (NISISTVEKRYEMKSSLTG) are Extracellular-facing. Residues 146 to 166 (LISSSYDISFCLLSLFVSFFG) form a helical membrane-spanning segment. Residues 167 to 172 (ERGHKP) lie on the Cytoplasmic side of the membrane. A helical transmembrane segment spans residues 173 to 197 (RWLAFAAFMIGLGALVFSLPQFFSG). Over 198-223 (EYKLGSLFEDTCVTTRNSTSCTSSTS) the chain is Extracellular. A helical membrane pass occupies residues 224–254 (SLSNYLYVFILGQLLLGAGGTPLYTLGTAFL). Topologically, residues 255 to 274 (DDSVPTHKSSLYIGTGYAMS) are cytoplasmic. The chain crosses the membrane as a helical span at residues 275–295 (ILGPAIGYVLGGQLLTIYIDV). At 296–311 (AMGESTDVTEDDPRWL) the chain is on the extracellular side. A helical transmembrane segment spans residues 312-336 (GAWWIGFLLSWIFAWSLIIPFSCFP). Over 337–377 (KHLPGTAEIQAGKTSQAHQSNSNADVKFGKSIKDFPAALKN) the chain is Cytoplasmic. Residues 378 to 399 (LMKNAVFMCLVLSTSSEALITT) traverse the membrane as a helical segment. The Extracellular portion of the chain corresponds to 400–419 (GFATFLPKFIENQFGLTSSF). The chain crosses the membrane as a helical span at residues 420 to 443 (AATLGGAVLIPGAALGQILGGFLV). Residues 444 to 447 (SKFR) are Cytoplasmic-facing. The chain crosses the membrane as a helical span at residues 448 to 471 (MTCKNTMKFALFTSGVALTLSFVF). Topologically, residues 472-580 (MYAKCENEPF…ETHCAKLPIF (109 aa)) are extracellular. The region spanning 495 to 549 (GNLIAPCNANCNCSRSYYYPVCGDGVQYFSPCFAGCSNPVAHRKPKVYYNCSCIE) is the Kazal-like domain. 3 disulfides stabilise this stretch: C501/C530, C507/C526, and C516/C547. Residues 581–603 (LCIFFIVIIFTFMAGTPITVSIL) traverse the membrane as a helical segment. Residues 604-612 (RCVNHRQRS) are Cytoplasmic-facing. A helical membrane pass occupies residues 613–638 (LALGIQFMVLRLLGTIPGPIIFGFTI). Topologically, residues 639–672 (DSTCILWDINDCGIKGACWIYDNIKMAHMLVAIS) are extracellular. A helical transmembrane segment spans residues 673–690 (VTCKVITMFFNGFAIFLY). Residues 691-724 (KPPPSATDVSFHKENAVVTNVLAEQDLNKIVKEG) are Cytoplasmic-facing.

The protein belongs to the organo anion transporter (TC 2.A.60) family. As to expression, predominantly expressed in kidney but also weakly expressed in both fetal liver and kidney.

The protein resides in the basolateral cell membrane. It catalyses the reaction estrone 3-sulfate(out) = estrone 3-sulfate(in). It carries out the reaction L-thyroxine(out) = L-thyroxine(in). The enzyme catalyses 3,3',5-triiodo-L-thyronine(out) = 3,3',5-triiodo-L-thyronine(in). The catalysed reaction is chenodeoxycholate(out) = chenodeoxycholate(in). It catalyses the reaction glycocholate(out) = glycocholate(in). It carries out the reaction L-homoarginine(in) = L-homoarginine(out). The enzyme catalyses L-arginine(in) = L-arginine(out). The catalysed reaction is N(omega),N(omega)-dimethyl-L-arginine(out) = N(omega),N(omega)-dimethyl-L-arginine(in). Functionally, mediates the transport of organic anions such as steroids (estrone 3-sulfate, chenodeoxycholate, glycocholate) and thyroid hormones (3,3',5-triiodo-L-thyronine (T3), L-thyroxine (T4)), in the kidney. Capable of transporting cAMP and pharmacological substances such as digoxin, ouabain and methotrexate. Transport is independent of sodium, chloride ion, and ATP. Transport activity is stimulated by an acidic extracellular environment due to increased substrate affinity to the transporter. The driving force for this transport activity is currently not known. The role of hydrogencarbonate (HCO3(-), bicarbonate) as the probable counteranion that exchanges for organic anions is still not well defined. Functions as an uptake transporter at the apical membrane, suggesting a role in renal reabsorption. Involved in the renal secretion of the uremic toxin ADMA (N(omega),N(omega)-dimethyl-L-arginine or asymmetrical dimethylarginine), which is associated to cardiovascular events and mortality, and the structurally related amino acids L-arginine and L-homoarginine (a cardioprotective biomarker). Can act bidirectionally, suggesting a dual protective role of this transport protein; exporting L-homoarginine after being synthesized in proximal tubule cells, and mediating uptake of ADMA from the blood into proximal tubule cells where it is degraded by the enzyme dimethylarginine dimethylaminohydrolase 1 (DDAH1). May be involved in sperm maturation by enabling directed movement of organic anions and compounds within or between cells. This ion-transporting process is important to maintain the strict epididymal homeostasis necessary for sperm maturation. May have a role in secretory functions since seminal vesicle epithelial cells are assumed to secrete proteins involved in decapacitation by modifying surface proteins to facilitate the acquisition of the ability to fertilize the egg. The protein is Solute carrier organic anion transporter family member 4C1 of Homo sapiens (Human).